Consider the following 348-residue polypeptide: Signal recognition particle receptor FtsY (348 aa).

GTP contacts are provided by residues 143–150 (GVNGVGKT), 225–229 (DTSGR), and 289–292 (TKMD).

This sequence belongs to the GTP-binding SRP family. FtsY subfamily. Part of the signal recognition particle protein translocation system, which is composed of SRP and FtsY.

It localises to the cell membrane. Its subcellular location is the cytoplasm. It catalyses the reaction GTP + H2O = GDP + phosphate + H(+). In terms of biological role, involved in targeting and insertion of nascent membrane proteins into the cytoplasmic membrane. Acts as a receptor for the complex formed by the signal recognition particle (SRP) and the ribosome-nascent chain (RNC). This chain is Signal recognition particle receptor FtsY, found in Mycoplasma pneumoniae (strain ATCC 29342 / M129 / Subtype 1) (Mycoplasmoides pneumoniae).